Consider the following 158-residue polypeptide: 6,7-dimethyl-8-ribityllumazine synthase (158 aa).

Residues phenylalanine 22, 56-58 (ALE), and 80-82 (VVI) each bind 5-amino-6-(D-ribitylamino)uracil. 85–86 (ET) contacts (2S)-2-hydroxy-3-oxobutyl phosphate. Histidine 88 functions as the Proton donor in the catalytic mechanism. 5-amino-6-(D-ribitylamino)uracil is bound at residue asparagine 113. Residue arginine 127 coordinates (2S)-2-hydroxy-3-oxobutyl phosphate.

This sequence belongs to the DMRL synthase family.

It carries out the reaction (2S)-2-hydroxy-3-oxobutyl phosphate + 5-amino-6-(D-ribitylamino)uracil = 6,7-dimethyl-8-(1-D-ribityl)lumazine + phosphate + 2 H2O + H(+). Its pathway is cofactor biosynthesis; riboflavin biosynthesis; riboflavin from 2-hydroxy-3-oxobutyl phosphate and 5-amino-6-(D-ribitylamino)uracil: step 1/2. In terms of biological role, catalyzes the formation of 6,7-dimethyl-8-ribityllumazine by condensation of 5-amino-6-(D-ribitylamino)uracil with 3,4-dihydroxy-2-butanone 4-phosphate. This is the penultimate step in the biosynthesis of riboflavin. The polypeptide is 6,7-dimethyl-8-ribityllumazine synthase (Neisseria meningitidis serogroup C (strain 053442)).